Consider the following 874-residue polypeptide: Probable inorganic carbon transporter subunit DabA (874 aa).

Positions 398, 400, 580, and 595 each coordinate Zn(2+).

Belongs to the inorganic carbon transporter (TC 9.A.2) DabA family. As to quaternary structure, forms a complex with DabB. It depends on Zn(2+) as a cofactor.

The protein localises to the cell membrane. Its function is as follows. Part of an energy-coupled inorganic carbon pump. This Bacillus cereus (strain 03BB102) protein is Probable inorganic carbon transporter subunit DabA.